The following is a 143-amino-acid chain: Transcriptional regulator MraZ (143 aa).

2 consecutive SpoVT-AbrB domains span residues 5–47 (EYEH…TLEE) and 76–119 (AVEV…DRAS).

It belongs to the MraZ family. As to quaternary structure, forms oligomers.

It localises to the cytoplasm. Its subcellular location is the nucleoid. This chain is Transcriptional regulator MraZ, found in Staphylococcus carnosus (strain TM300).